The primary structure comprises 374 residues: 2-aminoethylphosphonate--pyruvate transaminase 1 (374 aa).

Lys-195 bears the N6-(pyridoxal phosphate)lysine mark.

This sequence belongs to the class-V pyridoxal-phosphate-dependent aminotransferase family. PhnW subfamily. In terms of assembly, homodimer. Requires pyridoxal 5'-phosphate as cofactor.

The enzyme catalyses (2-aminoethyl)phosphonate + pyruvate = phosphonoacetaldehyde + L-alanine. In terms of biological role, involved in phosphonate degradation. This chain is 2-aminoethylphosphonate--pyruvate transaminase 1, found in Polaromonas sp. (strain JS666 / ATCC BAA-500).